Consider the following 301-residue polypeptide: tRNA-cytidine(32) 2-sulfurtransferase (301 aa).

A PP-loop motif motif is present at residues 55-60 (SGGKDS). The [4Fe-4S] cluster site is built by Cys130, Cys133, and Cys221.

Belongs to the TtcA family. Homodimer. It depends on Mg(2+) as a cofactor. Requires [4Fe-4S] cluster as cofactor.

Its subcellular location is the cytoplasm. The catalysed reaction is cytidine(32) in tRNA + S-sulfanyl-L-cysteinyl-[cysteine desulfurase] + AH2 + ATP = 2-thiocytidine(32) in tRNA + L-cysteinyl-[cysteine desulfurase] + A + AMP + diphosphate + H(+). The protein operates within tRNA modification. Functionally, catalyzes the ATP-dependent 2-thiolation of cytidine in position 32 of tRNA, to form 2-thiocytidine (s(2)C32). The sulfur atoms are provided by the cysteine/cysteine desulfurase (IscS) system. This chain is tRNA-cytidine(32) 2-sulfurtransferase, found in Acinetobacter baumannii (strain AB307-0294).